Reading from the N-terminus, the 100-residue chain is Class II hydrophobin 4 (100 aa).

The signal sequence occupies residues 1-17 (MQFYAIASLFLAGTAFA). Cystine bridges form between cysteine 29–cysteine 79, cysteine 40–cysteine 70, cysteine 41–cysteine 53, and cysteine 80–cysteine 92.

It belongs to the cerato-ulmin hydrophobin family.

Its subcellular location is the secreted. The protein localises to the cell wall. Its function is as follows. Aerial growth, conidiation, and dispersal of filamentous fungi in the environment rely upon a capability of their secreting small amphipathic proteins called hydrophobins (HPBs) with low sequence identity. Class I can self-assemble into an outermost layer of rodlet bundles on aerial cell surfaces, conferring cellular hydrophobicity that supports fungal growth, development and dispersal; whereas Class II form highly ordered films at water-air interfaces through intermolecular interactions but contribute nothing to the rodlet structure. Does not seem to be important for the ability to cause seedling disease. This chain is Class II hydrophobin 4, found in Gibberella moniliformis (Maize ear and stalk rot fungus).